The chain runs to 243 residues: NifU-like scaffold protein (243 aa).

This sequence belongs to the NifU family. As to quaternary structure, homodimer.

It is found in the plastid. The protein localises to the apicoplast. The protein operates within cofactor biosynthesis; iron-sulfur cluster biosynthesis. In terms of biological role, binds and transfers [4Fe-4S] iron-sulfur clusters to target proteins. The protein is NifU-like scaffold protein of Plasmodium berghei (strain Anka).